A 25-amino-acid chain; its full sequence is Nicotinic acetylcholine receptor-binding protein Mnn-4 (25 aa).

A disulfide bridge links Cys3 with Cys20.

The protein belongs to the three-finger toxin family. Short-chain subfamily. As to expression, expressed by the venom gland.

The protein resides in the secreted. In terms of biological role, binds and may inhibit nicotinic acetylcholine receptors (nAChR). The protein is Nicotinic acetylcholine receptor-binding protein Mnn-4 of Micrurus nigrocinctus (Central American coral snake).